The primary structure comprises 105 residues: Protein AlbB (105 aa).

Functionally, involved in the biosynthesis of albonoursin (cyclo[(alpha,beta-dehydro-Phe)-(alpha,beta-dehydro-Leu)]), an antibacterial peptide. AlbB is essential for cyclic dipeptide oxidase AlbA (CDO) activity. The polypeptide is Protein AlbB (albB) (Streptomyces noursei (Streptomyces albulus)).